Reading from the N-terminus, the 103-residue chain is Small ribosomal subunit protein uS10 (103 aa).

Belongs to the universal ribosomal protein uS10 family. In terms of assembly, part of the 30S ribosomal subunit.

Functionally, involved in the binding of tRNA to the ribosomes. The sequence is that of Small ribosomal subunit protein uS10 from Vibrio campbellii (strain ATCC BAA-1116).